We begin with the raw amino-acid sequence, 367 residues long: Peptide chain release factor 2 (367 aa).

Gln249 carries the N5-methylglutamine modification.

This sequence belongs to the prokaryotic/mitochondrial release factor family. In terms of processing, methylated by PrmC. Methylation increases the termination efficiency of RF2.

The protein localises to the cytoplasm. Its function is as follows. Peptide chain release factor 2 directs the termination of translation in response to the peptide chain termination codons UGA and UAA. The polypeptide is Peptide chain release factor 2 (Pseudothermotoga lettingae (strain ATCC BAA-301 / DSM 14385 / NBRC 107922 / TMO) (Thermotoga lettingae)).